The primary structure comprises 153 residues: Small ribosomal subunit protein bS6 (153 aa).

The tract at residues 97 to 153 (EEGPSAMMRKADRDRERDDRGGGFRGERDGGGFRGDRGDRGDRGPRRPRDEETADEE) is disordered. The segment covering 105 to 147 (RKADRDRERDDRGGGFRGERDGGGFRGDRGDRGDRGPRRPRDE) has biased composition (basic and acidic residues).

This sequence belongs to the bacterial ribosomal protein bS6 family.

Functionally, binds together with bS18 to 16S ribosomal RNA. This chain is Small ribosomal subunit protein bS6, found in Bradyrhizobium sp. (strain BTAi1 / ATCC BAA-1182).